A 362-amino-acid polypeptide reads, in one-letter code: S-adenosylmethionine:tRNA ribosyltransferase-isomerase (362 aa).

It belongs to the QueA family. In terms of assembly, monomer.

The protein localises to the cytoplasm. The enzyme catalyses 7-aminomethyl-7-carbaguanosine(34) in tRNA + S-adenosyl-L-methionine = epoxyqueuosine(34) in tRNA + adenine + L-methionine + 2 H(+). Its pathway is tRNA modification; tRNA-queuosine biosynthesis. Transfers and isomerizes the ribose moiety from AdoMet to the 7-aminomethyl group of 7-deazaguanine (preQ1-tRNA) to give epoxyqueuosine (oQ-tRNA). In Xanthobacter autotrophicus (strain ATCC BAA-1158 / Py2), this protein is S-adenosylmethionine:tRNA ribosyltransferase-isomerase.